A 512-amino-acid polypeptide reads, in one-letter code: Glutathione-binding protein GsiB (512 aa).

Residues 1-26 form the signal peptide; that stretch reads MTQFITHKWLAALGLASSIAAFPALA.

It belongs to the bacterial solute-binding protein 5 family. The complex is composed of two ATP-binding proteins (GsiA), two transmembrane proteins (GsiC and GsiD) and a solute-binding protein (GsiB).

It localises to the periplasm. Part of the ABC transporter complex GsiABCD involved in glutathione import. Binds glutathione. The chain is Glutathione-binding protein GsiB from Salmonella typhimurium (strain LT2 / SGSC1412 / ATCC 700720).